We begin with the raw amino-acid sequence, 259 residues long: Probable kinetochore protein spc25 (259 aa).

Residues 1–20 (MSRKSVMSSTFEPSLSTSRQ) are compositionally biased toward polar residues. The interval 1-25 (MSRKSVMSSTFEPSLSTSRQPLGPS) is disordered. The stretch at 59 to 162 (RKRVLEERNQ…HAAQLEAQAR (104 aa)) forms a coiled coil.

This sequence belongs to the SPC25 family. Component of the NDC80 complex, which consists of kpr-1/ndc80, kpr-2/nuf2, kpr-3/spc24 and kpr-4/spc25.

It is found in the nucleus. It localises to the chromosome. Its subcellular location is the centromere. The protein localises to the kinetochore. In terms of biological role, acts as a component of the essential kinetochore-associated NDC80 complex, which is required for chromosome segregation and spindle checkpoint activity. The polypeptide is Probable kinetochore protein spc25 (kpr-4) (Neurospora crassa (strain ATCC 24698 / 74-OR23-1A / CBS 708.71 / DSM 1257 / FGSC 987)).